The following is a 258-amino-acid chain: Putative phosphoenolpyruvate synthase regulatory protein (258 aa).

146–153 (GVSRVGKT) serves as a coordination point for ADP.

It belongs to the pyruvate, phosphate/water dikinase regulatory protein family. PSRP subfamily.

The catalysed reaction is [pyruvate, water dikinase] + ADP = [pyruvate, water dikinase]-phosphate + AMP + H(+). It carries out the reaction [pyruvate, water dikinase]-phosphate + phosphate + H(+) = [pyruvate, water dikinase] + diphosphate. Bifunctional serine/threonine kinase and phosphorylase involved in the regulation of the phosphoenolpyruvate synthase (PEPS) by catalyzing its phosphorylation/dephosphorylation. The polypeptide is Putative phosphoenolpyruvate synthase regulatory protein (Thiobacillus denitrificans (strain ATCC 25259 / T1)).